Here is a 157-residue protein sequence, read N- to C-terminus: uncharacterized protein (157 aa).

The protein to E.coli YcjD and H.influenzae HI_0925.

This is an uncharacterized protein from Haemophilus influenzae (strain ATCC 51907 / DSM 11121 / KW20 / Rd).